A 360-amino-acid polypeptide reads, in one-letter code: Phospho-N-acetylmuramoyl-pentapeptide-transferase (360 aa).

10 helical membrane-spanning segments follow: residues 25–45 (RGIL…PWMI), 73–93 (TMGG…WADL), 97–117 (YVWV…VDDY), 142–162 (VGAA…TLII), 168–188 (ASIP…VGSS), 199–219 (GLAI…CYLS), 236–256 (AGEL…FLWF), 263–283 (VFMG…IAVI), 288–308 (IVLF…VIQV), and 338–358 (VIVR…ATLK).

The protein belongs to the glycosyltransferase 4 family. MraY subfamily. It depends on Mg(2+) as a cofactor.

The protein localises to the cell inner membrane. The enzyme catalyses UDP-N-acetyl-alpha-D-muramoyl-L-alanyl-gamma-D-glutamyl-meso-2,6-diaminopimeloyl-D-alanyl-D-alanine + di-trans,octa-cis-undecaprenyl phosphate = di-trans,octa-cis-undecaprenyl diphospho-N-acetyl-alpha-D-muramoyl-L-alanyl-D-glutamyl-meso-2,6-diaminopimeloyl-D-alanyl-D-alanine + UMP. The protein operates within cell wall biogenesis; peptidoglycan biosynthesis. Functionally, catalyzes the initial step of the lipid cycle reactions in the biosynthesis of the cell wall peptidoglycan: transfers peptidoglycan precursor phospho-MurNAc-pentapeptide from UDP-MurNAc-pentapeptide onto the lipid carrier undecaprenyl phosphate, yielding undecaprenyl-pyrophosphoryl-MurNAc-pentapeptide, known as lipid I. This is Phospho-N-acetylmuramoyl-pentapeptide-transferase from Pseudomonas fluorescens (strain SBW25).